Consider the following 299-residue polypeptide: uncharacterized protein (299 aa).

The next 6 membrane-spanning stretches (helical) occupy residues 32–52 (FILLLIIIAAIPLLISYYLHL), 56–76 (SMIIFVVIYVGAALFIPSILY), 199–219 (LAIGFIILCGVIPAVAALLGA), 220–240 (YLIAVSGMLSGVAPIPPVKPE), 246–266 (FEIVQMGTAIIGALFAIPIFG), and 273–293 (FLISAVTMTIGVLAYYTILKF).

It is found in the cell membrane. This is an uncharacterized protein from Methanocaldococcus jannaschii (strain ATCC 43067 / DSM 2661 / JAL-1 / JCM 10045 / NBRC 100440) (Methanococcus jannaschii).